The chain runs to 495 residues: Type-1 histone deacetylase 1 (495 aa).

Residue Asp-94 participates in substrate binding. His-136 acts as the Proton acceptor in catalysis. Gly-144 contacts substrate. A divalent metal cation is bound by residues Asp-171, His-173, and Asp-259. Residue Tyr-298 coordinates substrate. The segment at 372 to 495 (PAAAHHDIPP…EDADVDMDSG (124 aa)) is disordered. Basic and acidic residues predominate over residues 396-413 (DVRISEADRDKKVHHQGE). The span at 425 to 443 (NYSNGLEATSTSRRNQVSI) shows a compositional bias: polar residues. Residues 454–480 (NSRNNNNNNNNNNNNNNNNNNNSNNNN) show a composition bias toward low complexity.

It belongs to the histone deacetylase family. HD type 1 subfamily.

The protein resides in the nucleus. Its subcellular location is the cytoplasm. The catalysed reaction is N(6)-acetyl-L-lysyl-[histone] + H2O = L-lysyl-[histone] + acetate. Its function is as follows. Responsible for the deacetylation of lysine residues on the N-terminal part of the core histones (H2A, H2B, H3 and H4). Histone deacetylation plays an important role in transcriptional regulation, cell cycle progression and developmental events. Histone deacetylases act via the formation of large multiprotein complexes. This is Type-1 histone deacetylase 1 (hdaA) from Dictyostelium discoideum (Social amoeba).